Here is a 258-residue protein sequence, read N- to C-terminus: Histidine/lysine/arginine/ornithine transport ATP-binding protein HisP (258 aa).

One can recognise an ABC transporter domain in the interval 7 to 253; the sequence is LHVIDLHKRY…PQSPRLQQFL (247 aa). ATP is bound by residues Ser-41, Gly-42, Gly-44, Lys-45, Ser-46, and Thr-47.

It belongs to the ABC transporter superfamily. As to quaternary structure, the HisPMQJ complex is composed of two ATP-binding proteins (HisP), two transmembrane proteins (HisM and HisQ) and a solute-binding protein (HisJ). The HisPMQ-ArgT complex is composed of two ATP-binding proteins (HisP), two transmembrane proteins (HisM and HisQ) and a solute-binding protein (ArgT).

It localises to the cell inner membrane. It catalyses the reaction a polar amino acid(out) + ATP + H2O = a polar amino acid(in) + ADP + phosphate + H(+). It carries out the reaction L-histidine(out) + ATP + H2O = L-histidine(in) + ADP + phosphate + H(+). The catalysed reaction is L-lysine(out) + ATP + H2O = L-lysine(in) + ADP + phosphate + H(+). The enzyme catalyses L-arginine(out) + ATP + H2O = L-arginine(in) + ADP + phosphate + H(+). It catalyses the reaction L-ornithine(out) + ATP + H2O = L-ornithine(in) + ADP + phosphate + H(+). With respect to regulation, isolated, soluble HisP has a very low ATPase activity. ATPase activity is slightly increased in the presence of HisM and HisQ, and strongly increased when HisJ is also present. In terms of biological role, part of the ABC transporter complex HisPMQJ involved in histidine transport. Is also part of the ABC transporter complex HisPMQ-ArgT involved in lysine/arginine/ornithine transport. Shows ATPase activity. Responsible for energy coupling to the transport system. The polypeptide is Histidine/lysine/arginine/ornithine transport ATP-binding protein HisP (Salmonella typhimurium (strain LT2 / SGSC1412 / ATCC 700720)).